The chain runs to 470 residues: Cell division protein FtsP (470 aa).

The segment at residues 1 to 27 (MSLSRRQFIQASGIALCAGAVPLKASA) is a signal peptide (tat-type signal). Residues 229-287 (VRLRLLNASNSRRYQLQMSDGRPLHVISGDQGFLPAPVSVKQLSLAPGERREILVDMSN) form the Plastocyanin-like domain.

Belongs to the FtsP family. In terms of processing, predicted to be exported by the Tat system. The position of the signal peptide cleavage has not been experimentally proven.

The protein localises to the periplasm. Cell division protein that is required for growth during stress conditions. May be involved in protecting or stabilizing the divisomal assembly under conditions of stress. This chain is Cell division protein FtsP, found in Shigella dysenteriae serotype 1 (strain Sd197).